The sequence spans 151 residues: Methylglyoxal synthase (151 aa).

Positions 6 to 151 (RTMPAHKHVA…DYEAYLAERM (146 aa)) constitute an MGS-like domain. Substrate is bound by residues histidine 19, lysine 23, 45–48 (TGTT), and 65–66 (SG). Aspartate 71 functions as the Proton donor/acceptor in the catalytic mechanism. Histidine 98 contacts substrate.

This sequence belongs to the methylglyoxal synthase family.

The catalysed reaction is dihydroxyacetone phosphate = methylglyoxal + phosphate. In terms of biological role, catalyzes the formation of methylglyoxal from dihydroxyacetone phosphate. The sequence is that of Methylglyoxal synthase from Vibrio parahaemolyticus serotype O3:K6 (strain RIMD 2210633).